The following is a 280-amino-acid chain: MSEQPVYGAAAEAPKPRVKVRTHHLHKWKAEGHKWAMLTAYDYSTAAVFDEAEIPVLLVGDSAANVVYGYDTTVPVTLDELIPLVRGVVRGAPHALVVADLPFGSYEAGPQQALATATRMLKETGAHAVKLEGGERVADQIAAVSAAGIPVMAHIGFTPQSVNGLGGFRVQGRGDAAEQTIHDAIAVQEAGAFAVVMEMVPAELATQITGKLTIPTVGIGAGPSCDAQVLVWQDMAGMTNGKTAKFVKRFGAVGDELRRAASDYAREVATGAFPADEHSY.

Mg(2+) is bound by residues aspartate 61 and aspartate 100. 3-methyl-2-oxobutanoate contacts are provided by residues 61–62, aspartate 100, and lysine 130; that span reads DS. Position 132 (glutamate 132) interacts with Mg(2+). Residue glutamate 198 is the Proton acceptor of the active site.

This sequence belongs to the PanB family. In terms of assembly, homodecamer; pentamer of dimers. Mg(2+) is required as a cofactor.

Its subcellular location is the cytoplasm. It carries out the reaction 3-methyl-2-oxobutanoate + (6R)-5,10-methylene-5,6,7,8-tetrahydrofolate + H2O = 2-dehydropantoate + (6S)-5,6,7,8-tetrahydrofolate. It participates in cofactor biosynthesis; (R)-pantothenate biosynthesis; (R)-pantoate from 3-methyl-2-oxobutanoate: step 1/2. Catalyzes the reversible reaction in which hydroxymethyl group from 5,10-methylenetetrahydrofolate is transferred onto alpha-ketoisovalerate to form ketopantoate. The polypeptide is 3-methyl-2-oxobutanoate hydroxymethyltransferase (Mycolicibacterium vanbaalenii (strain DSM 7251 / JCM 13017 / BCRC 16820 / KCTC 9966 / NRRL B-24157 / PYR-1) (Mycobacterium vanbaalenii)).